The sequence spans 257 residues: Ethanolamine ammonia-lyase small subunit (257 aa).

Val-153, Glu-174, and Cys-203 together coordinate adenosylcob(III)alamin.

This sequence belongs to the EutC family. In terms of assembly, the basic unit is a heterodimer which dimerizes to form tetramers. The heterotetramers trimerize; 6 large subunits form a core ring with 6 small subunits projecting outwards. It depends on adenosylcob(III)alamin as a cofactor.

It localises to the bacterial microcompartment. It catalyses the reaction ethanolamine = acetaldehyde + NH4(+). Its pathway is amine and polyamine degradation; ethanolamine degradation. Catalyzes the deamination of various vicinal amino-alcohols to oxo compounds. Allows this organism to utilize ethanolamine as the sole source of nitrogen and carbon in the presence of external vitamin B12. The chain is Ethanolamine ammonia-lyase small subunit from Rhodococcus erythropolis (Arthrobacter picolinophilus).